The chain runs to 251 residues: Methylthioribulose-1-phosphate dehydratase (251 aa).

Positions 1-26 (MTSVCDATNEDKENGSESTESQDKEH) are disordered. Basic and acidic residues predominate over residues 9–26 (NEDKENGSESTESQDKEH). Substrate is bound at residue cysteine 100. Histidine 118 and histidine 120 together coordinate Zn(2+). Glutamate 142 (proton donor/acceptor) is an active-site residue. Zn(2+) is bound at residue histidine 198. A disordered region spans residues 232 to 251 (MDPSAPPIEENHYYDVQQSQ).

It belongs to the aldolase class II family. MtnB subfamily. Requires Zn(2+) as cofactor.

The protein resides in the cytoplasm. The enzyme catalyses 5-(methylsulfanyl)-D-ribulose 1-phosphate = 5-methylsulfanyl-2,3-dioxopentyl phosphate + H2O. It functions in the pathway amino-acid biosynthesis; L-methionine biosynthesis via salvage pathway; L-methionine from S-methyl-5-thio-alpha-D-ribose 1-phosphate: step 2/6. Catalyzes the dehydration of methylthioribulose-1-phosphate (MTRu-1-P) into 2,3-diketo-5-methylthiopentyl-1-phosphate (DK-MTP-1-P). Functions in the methionine salvage pathway. May play a role in apoptosis. This Salmo salar (Atlantic salmon) protein is Methylthioribulose-1-phosphate dehydratase.